A 106-amino-acid chain; its full sequence is Large ribosomal subunit protein P2 (106 aa).

Residues 80–106 form a disordered region; it reads AAAAPAKKVVEEKKEESDDDMGMGLFD.

Belongs to the eukaryotic ribosomal protein P1/P2 family. P1 and P2 exist as dimers at the large ribosomal subunit. In terms of processing, phosphorylated.

Its function is as follows. Plays an important role in the elongation step of protein synthesis. This is Large ribosomal subunit protein P2 (rplp2) from Dictyostelium discoideum (Social amoeba).